The sequence spans 521 residues: NADH-quinone oxidoreductase subunit N (521 aa).

14 helical membrane-spanning segments follow: residues 15–35 (LAPE…DLIL), 43–63 (IIGW…IWRM), 98–118 (LLKI…LGST), 128–148 (AEFY…ASSG), 150–170 (LVTL…LVGL), 185–205 (VVTG…LYGV), 227–247 (ALVY…IAAA), 261–281 (PTPV…AAVF), 303–323 (VFFA…VSAL), 331–351 (LLAL…AISV), 363–383 (VFYL…VTVI), 406–426 (AAAM…AGFF), 442–462 (WLVA…FGII), and 485–505 (TVIW…GPLM).

This sequence belongs to the complex I subunit 2 family. In terms of assembly, NDH-1 is composed of 14 different subunits. Subunits NuoA, H, J, K, L, M, N constitute the membrane sector of the complex.

It localises to the cell membrane. The catalysed reaction is a quinone + NADH + 5 H(+)(in) = a quinol + NAD(+) + 4 H(+)(out). Its function is as follows. NDH-1 shuttles electrons from NADH, via FMN and iron-sulfur (Fe-S) centers, to quinones in the respiratory chain. The immediate electron acceptor for the enzyme in this species is believed to be a menaquinone. Couples the redox reaction to proton translocation (for every two electrons transferred, four hydrogen ions are translocated across the cytoplasmic membrane), and thus conserves the redox energy in a proton gradient. The polypeptide is NADH-quinone oxidoreductase subunit N (Paenibacillus sp. (strain JDR-2)).